Reading from the N-terminus, the 550-residue chain is Arginine--tRNA ligase (550 aa).

The 'HIGH' region motif lies at 130-140; sequence ANPTGPIHIGG.

The protein belongs to the class-I aminoacyl-tRNA synthetase family. Monomer.

It is found in the cytoplasm. The enzyme catalyses tRNA(Arg) + L-arginine + ATP = L-arginyl-tRNA(Arg) + AMP + diphosphate. The sequence is that of Arginine--tRNA ligase from Mycolicibacterium paratuberculosis (strain ATCC BAA-968 / K-10) (Mycobacterium paratuberculosis).